A 431-amino-acid chain; its full sequence is Gamma-glutamyl phosphate reductase (431 aa).

Belongs to the gamma-glutamyl phosphate reductase family.

Its subcellular location is the cytoplasm. It catalyses the reaction L-glutamate 5-semialdehyde + phosphate + NADP(+) = L-glutamyl 5-phosphate + NADPH + H(+). It functions in the pathway amino-acid biosynthesis; L-proline biosynthesis; L-glutamate 5-semialdehyde from L-glutamate: step 2/2. Functionally, catalyzes the NADPH-dependent reduction of L-glutamate 5-phosphate into L-glutamate 5-semialdehyde and phosphate. The product spontaneously undergoes cyclization to form 1-pyrroline-5-carboxylate. The polypeptide is Gamma-glutamyl phosphate reductase (Methylobacterium nodulans (strain LMG 21967 / CNCM I-2342 / ORS 2060)).